Reading from the N-terminus, the 373-residue chain is 4-hydroxy-3-methylbut-2-en-1-yl diphosphate synthase (flavodoxin) (373 aa).

[4Fe-4S] cluster is bound by residues Cys-270, Cys-273, Cys-305, and Glu-312.

It belongs to the IspG family. [4Fe-4S] cluster is required as a cofactor.

The catalysed reaction is (2E)-4-hydroxy-3-methylbut-2-enyl diphosphate + oxidized [flavodoxin] + H2O + 2 H(+) = 2-C-methyl-D-erythritol 2,4-cyclic diphosphate + reduced [flavodoxin]. It functions in the pathway isoprenoid biosynthesis; isopentenyl diphosphate biosynthesis via DXP pathway; isopentenyl diphosphate from 1-deoxy-D-xylulose 5-phosphate: step 5/6. Functionally, converts 2C-methyl-D-erythritol 2,4-cyclodiphosphate (ME-2,4cPP) into 1-hydroxy-2-methyl-2-(E)-butenyl 4-diphosphate. This chain is 4-hydroxy-3-methylbut-2-en-1-yl diphosphate synthase (flavodoxin), found in Vibrio atlanticus (strain LGP32) (Vibrio splendidus (strain Mel32)).